The primary structure comprises 547 residues: 4-coumarate-CoA ligase 1 (547 aa).

ATP is bound by residues 190-194, histidine 238, 310-312, 332-333, threonine 337, aspartate 421, arginine 436, and lysine 527; these read SSGTT, AAP, and QG. Residues 263–332 are SBD1; it reads EIVRLMELVE…EKLPNAKLGQ (70 aa). The segment at 333–400 is SBD2; that stretch reads GYGMTEAGPV…IRGNQIMKGY (68 aa).

It belongs to the ATP-dependent AMP-binding enzyme family. As to expression, mostly expressed in stems, and, to a lower extent, in bulbs.

It carries out the reaction (E)-4-coumarate + ATP + CoA = (E)-4-coumaroyl-CoA + AMP + diphosphate. The protein operates within phytoalexin biosynthesis; 3,4',5-trihydroxystilbene biosynthesis; 3,4',5-trihydroxystilbene from trans-4-coumarate: step 1/2. In terms of biological role, produces CoA thioesters of a variety of hydroxy- and methoxy-substituted cinnamic acids, which are used to synthesize several phenylpropanoid-derived compounds, including anthocyanins, flavonoids, isoflavonoids, coumarins, lignin, suberin and wall-bound phenolics. The protein is 4-coumarate-CoA ligase 1 of Narcissus pseudonarcissus (Daffodil).